A 363-amino-acid polypeptide reads, in one-letter code: Fructose-bisphosphate aldolase A (363 aa).

R43 is a beta-D-fructose 1,6-bisphosphate binding site. E188 functions as the Proton acceptor in the catalytic mechanism. The active-site Schiff-base intermediate with dihydroxyacetone-P is the K230. Residues 272–274, S301, and R304 each bind beta-D-fructose 1,6-bisphosphate; that span reads SGG.

It belongs to the class I fructose-bisphosphate aldolase family. In terms of assembly, tetramer.

It carries out the reaction beta-D-fructose 1,6-bisphosphate = D-glyceraldehyde 3-phosphate + dihydroxyacetone phosphate. It functions in the pathway carbohydrate degradation; glycolysis; D-glyceraldehyde 3-phosphate and glycerone phosphate from D-glucose: step 4/4. In terms of biological role, plays a key role in glycolysis and gluconeogenesis. In Salmo salar (Atlantic salmon), this protein is Fructose-bisphosphate aldolase A.